The chain runs to 101 residues: Small ribosomal subunit protein uS14 (101 aa).

It belongs to the universal ribosomal protein uS14 family. Part of the 30S ribosomal subunit. Contacts proteins S3 and S10.

In terms of biological role, binds 16S rRNA, required for the assembly of 30S particles and may also be responsible for determining the conformation of the 16S rRNA at the A site. The polypeptide is Small ribosomal subunit protein uS14 (Protochlamydia amoebophila (strain UWE25)).